The following is a 122-amino-acid chain: Hexon-interlacing protein (122 aa).

Residues Val-72 to Ala-106 are a coiled coil.

This sequence belongs to the adenoviridae hexon-interlacing protein family. As to quaternary structure, homotrimer. Interacts with hexon protein; this interaction tethers the hexons together. Self-interacts with adjacent proteins. Interacts with kinesin light chain KLC1; this interaction leads to capsid disruption at the nuclear pore complex during virus entry into host cell.

It localises to the virion. The protein resides in the host nucleus. In terms of biological role, structural component of the virion that acts as a cement protein on the capsid exterior and forms triskelion structures consisting of three molecules that stabilize three hexon trimers at the center of each icosahedral facet and fixes the peripentonal hexons. Dispensable for assembly. During virus entry, recruits the anterograde motor kinesin-1 to the capsid docked at the nuclear pore complex thereby subjecting the docked capsid to a pulling force. The resulting tension leads to capsid disruption, dispersion of capsid fragments toward cell periphery and eventually viral DNA entry into the host nucleus. This chain is Hexon-interlacing protein, found in Tupaiidae (tree shrews).